We begin with the raw amino-acid sequence, 240 residues long: Phosducin-like protein 3 (240 aa).

Met-1 is subject to N-acetylmethionine. Positions 27 to 181 (KELEEEEAEK…EGDIKAQFIG (155 aa)) constitute a Phosducin domain. A phosphoserine mark is found at Ser-44, Ser-65, Ser-235, and Ser-237. The segment at 92-240 (FGEVLEISGK…MRRDSDSEDD (149 aa)) is thioredoxin fold.

Belongs to the phosducin family. Interacts (via thioredoxin fold region) with KDR/VEGFR2 (via juxtamembrane domain). Forms ternary complexes with the chaperonin CCT complex and actin substrate, leading to inhibition of actin folding. Interacts with XIAP (via BIR 3 and RING domain). Interacts with HSP90AA1 and HSP90AB1. Post-translationally, N-terminal methionine acetylation destabilizes the protein. Expressed in blood vessels (at protein level).

It localises to the cytoplasm. It is found in the perinuclear region. The protein resides in the endoplasmic reticulum. Its function is as follows. Acts as a chaperone for the angiogenic VEGF receptor KDR/VEGFR2, increasing its abundance by inhibiting its ubiquitination and degradation. Inhibits the folding activity of the chaperonin-containing T-complex (CCT) which leads to inhibition of cytoskeletal actin folding. Acts as a chaperone during heat shock alongside HSP90 and HSP40/70 chaperone complexes. Modulates the activation of caspases during apoptosis. In Mus musculus (Mouse), this protein is Phosducin-like protein 3 (Pdcl3).